A 212-amino-acid polypeptide reads, in one-letter code: Large ribosomal subunit protein uL3 (212 aa).

This sequence belongs to the universal ribosomal protein uL3 family. As to quaternary structure, part of the 50S ribosomal subunit. Forms a cluster with proteins L14 and L19.

In terms of biological role, one of the primary rRNA binding proteins, it binds directly near the 3'-end of the 23S rRNA, where it nucleates assembly of the 50S subunit. In Ruminiclostridium cellulolyticum (strain ATCC 35319 / DSM 5812 / JCM 6584 / H10) (Clostridium cellulolyticum), this protein is Large ribosomal subunit protein uL3.